We begin with the raw amino-acid sequence, 396 residues long: Phosphopentomutase (396 aa).

Mn(2+)-binding residues include D13, D288, H293, D329, H330, and H341.

This sequence belongs to the phosphopentomutase family. It depends on Mn(2+) as a cofactor.

It is found in the cytoplasm. The catalysed reaction is 2-deoxy-alpha-D-ribose 1-phosphate = 2-deoxy-D-ribose 5-phosphate. It catalyses the reaction alpha-D-ribose 1-phosphate = D-ribose 5-phosphate. It participates in carbohydrate degradation; 2-deoxy-D-ribose 1-phosphate degradation; D-glyceraldehyde 3-phosphate and acetaldehyde from 2-deoxy-alpha-D-ribose 1-phosphate: step 1/2. Isomerase that catalyzes the conversion of deoxy-ribose 1-phosphate (dRib-1-P) and ribose 1-phosphate (Rib-1-P) to deoxy-ribose 5-phosphate (dRib-5-P) and ribose 5-phosphate (Rib-5-P), respectively. This Clostridium perfringens (strain SM101 / Type A) protein is Phosphopentomutase.